The sequence spans 78 residues: Large ribosomal subunit protein bL28 (78 aa).

The protein belongs to the bacterial ribosomal protein bL28 family.

The sequence is that of Large ribosomal subunit protein bL28 from Acinetobacter baylyi (strain ATCC 33305 / BD413 / ADP1).